Consider the following 1578-residue polypeptide: Pentafunctional AROM polypeptide (1578 aa).

The interval 1 to 384 (MAEPTKIKIL…YEPKASVVPN (384 aa)) is 3-dehydroquinate synthase. NAD(+) contacts are provided by residues 44–46 (DTN), 81–84 (EVSK), 114–116 (GGV), and aspartate 119. Arginine 130 provides a ligand contact to 7-phospho-2-dehydro-3-deoxy-D-arabino-heptonate. 139–140 (TT) is an NAD(+) binding site. Positions 146 and 152 each coordinate 7-phospho-2-dehydro-3-deoxy-D-arabino-heptonate. Residue lysine 161 participates in NAD(+) binding. Asparagine 162 provides a ligand contact to 7-phospho-2-dehydro-3-deoxy-D-arabino-heptonate. Residues 179 to 182 (FLET) and asparagine 190 each bind NAD(+). Zn(2+) is bound at residue glutamate 194. 7-phospho-2-dehydro-3-deoxy-D-arabino-heptonate is bound by residues 194–197 (EVIK) and lysine 250. Glutamate 260 functions as the Proton acceptor; for 3-dehydroquinate synthase activity in the catalytic mechanism. 7-phospho-2-dehydro-3-deoxy-D-arabino-heptonate-binding positions include 264 to 268 (RNLLN) and histidine 271. Zn(2+) is bound at residue histidine 271. Histidine 275 serves as the catalytic Proton acceptor; for 3-dehydroquinate synthase activity. 7-phospho-2-dehydro-3-deoxy-D-arabino-heptonate contacts are provided by histidine 287 and lysine 356. Histidine 287 contacts Zn(2+). An EPSP synthase region spans residues 397–842 (VHPGVEPASN…WDTLRQKFSA (446 aa)). Catalysis depends on cysteine 824, which acts as the For EPSP synthase activity. Residues 864–1055 (TASVFIIGMR…KRKKHSFFVS (192 aa)) are shikimate kinase. 871–878 (GMRGAGKT) serves as a coordination point for ATP. Positions 1056–1276 (LTLPDLRTAG…AAPGQLSATE (221 aa)) are 3-dehydroquinase. Histidine 1179 (proton acceptor; for 3-dehydroquinate dehydratase activity) is an active-site residue. The Schiff-base intermediate with substrate; for 3-dehydroquinate dehydratase activity role is filled by lysine 1207. A shikimate dehydrogenase region spans residues 1289–1578 (QKKFAVFGTP…EDARAAVLSS (290 aa)).

It in the N-terminal section; belongs to the sugar phosphate cyclases superfamily. Dehydroquinate synthase family. The protein in the 2nd section; belongs to the EPSP synthase family. This sequence in the 3rd section; belongs to the shikimate kinase family. In the 4th section; belongs to the type-I 3-dehydroquinase family. It in the C-terminal section; belongs to the shikimate dehydrogenase family. In terms of assembly, homodimer. Zn(2+) is required as a cofactor.

The protein resides in the cytoplasm. The enzyme catalyses 7-phospho-2-dehydro-3-deoxy-D-arabino-heptonate = 3-dehydroquinate + phosphate. The catalysed reaction is 3-dehydroquinate = 3-dehydroshikimate + H2O. It catalyses the reaction shikimate + NADP(+) = 3-dehydroshikimate + NADPH + H(+). It carries out the reaction shikimate + ATP = 3-phosphoshikimate + ADP + H(+). The enzyme catalyses 3-phosphoshikimate + phosphoenolpyruvate = 5-O-(1-carboxyvinyl)-3-phosphoshikimate + phosphate. Its pathway is metabolic intermediate biosynthesis; chorismate biosynthesis; chorismate from D-erythrose 4-phosphate and phosphoenolpyruvate: step 2/7. It participates in metabolic intermediate biosynthesis; chorismate biosynthesis; chorismate from D-erythrose 4-phosphate and phosphoenolpyruvate: step 3/7. It functions in the pathway metabolic intermediate biosynthesis; chorismate biosynthesis; chorismate from D-erythrose 4-phosphate and phosphoenolpyruvate: step 4/7. The protein operates within metabolic intermediate biosynthesis; chorismate biosynthesis; chorismate from D-erythrose 4-phosphate and phosphoenolpyruvate: step 5/7. Its pathway is metabolic intermediate biosynthesis; chorismate biosynthesis; chorismate from D-erythrose 4-phosphate and phosphoenolpyruvate: step 6/7. Functionally, the AROM polypeptide catalyzes 5 consecutive enzymatic reactions in prechorismate polyaromatic amino acid biosynthesis. The sequence is that of Pentafunctional AROM polypeptide from Aspergillus flavus (strain ATCC 200026 / FGSC A1120 / IAM 13836 / NRRL 3357 / JCM 12722 / SRRC 167).